Here is a 184-residue protein sequence, read N- to C-terminus: Ribosome-recycling factor (184 aa).

Belongs to the RRF family.

Its subcellular location is the cytoplasm. Responsible for the release of ribosomes from messenger RNA at the termination of protein biosynthesis. May increase the efficiency of translation by recycling ribosomes from one round of translation to another. The chain is Ribosome-recycling factor from Hyphomonas neptunium (strain ATCC 15444).